Consider the following 380-residue polypeptide: Acid phosphatase-like protein XcAP-3 (380 aa).

Positions 1–19 are cleaved as a signal peptide; sequence MKATILLFLVLAVVQLSTA. 3 disulfide bridges follow: Cys-147–Cys-374, Cys-167–Cys-221, and Cys-347–Cys-351.

It belongs to the histidine acid phosphatase family.

The protein resides in the secreted. In terms of biological role, probably modulates blood feeding of fleas on vertebrate species by binding and sequestering different mediators involved in the host response. Binds histamine. Binds leukotriene C4. Does not bind serotonin, adrenaline, noradrenaline, leukotriene B4, leukotriene D4, leukotriene E4, ADP, and stable analogs of thromboxane A2: U-46619 and cTXA2. The polypeptide is Acid phosphatase-like protein XcAP-3 (Xenopsylla cheopis (Oriental rat flea)).